The sequence spans 254 residues: MVIANSNIIFVAGLGGIGLDTSREIVKSGPKNLVLLDRIDNPAAIAELSALNPKVTVTFYPYDVTVPLAETKKLLKTIFDKLKTVDLLINGAGILDDHQIERTIAVNFTGTVNTTTAIMDFWDKRNGGPGGVIANICSVTGFNSIYQVPVYSASKAAALSFTNSLARLASVTGVTAYSINPGITKTVLVHKFNSWLNVEPRVAELLLEHPTQTTVQCAQNFVKAIEANQNGAIWKLDLGRLDPIEWTKHWDSGI.

Residue 10-33 (FVAGLGGIGLDTSREIVKSGPKNL) participates in NAD(+) binding. Position 138 (serine 138) interacts with substrate. Residue tyrosine 151 is the Proton acceptor of the active site.

Belongs to the short-chain dehydrogenases/reductases (SDR) family. Homodimer.

It catalyses the reaction a primary alcohol + NAD(+) = an aldehyde + NADH + H(+). The catalysed reaction is a secondary alcohol + NAD(+) = a ketone + NADH + H(+). In Drosophila mimica (Fruit fly), this protein is Alcohol dehydrogenase (Adh).